Reading from the N-terminus, the 459-residue chain is Phosphomethylpyrimidine synthase (459 aa).

Residues N80, M109, Y139, H175, S195–G197, D236–R239, and E275 contribute to the substrate site. H279 contacts Zn(2+). Y302 lines the substrate pocket. H343 is a Zn(2+) binding site. C423, C426, and C431 together coordinate [4Fe-4S] cluster.

Belongs to the ThiC family. The cofactor is [4Fe-4S] cluster.

The catalysed reaction is 5-amino-1-(5-phospho-beta-D-ribosyl)imidazole + S-adenosyl-L-methionine = 4-amino-2-methyl-5-(phosphooxymethyl)pyrimidine + CO + 5'-deoxyadenosine + formate + L-methionine + 3 H(+). The protein operates within cofactor biosynthesis; thiamine diphosphate biosynthesis. Catalyzes the synthesis of the hydroxymethylpyrimidine phosphate (HMP-P) moiety of thiamine from aminoimidazole ribotide (AIR) in a radical S-adenosyl-L-methionine (SAM)-dependent reaction. This is Phosphomethylpyrimidine synthase from Gloeothece citriformis (strain PCC 7424) (Cyanothece sp. (strain PCC 7424)).